Consider the following 172-residue polypeptide: Bifunctional protein PyrR (172 aa).

The PRPP-binding motif lies at 90–102 (LVLVDDVLMSGRT).

The protein belongs to the purine/pyrimidine phosphoribosyltransferase family. PyrR subfamily.

It catalyses the reaction UMP + diphosphate = 5-phospho-alpha-D-ribose 1-diphosphate + uracil. Regulates the transcription of the pyrimidine nucleotide (pyr) operon in response to exogenous pyrimidines. Functionally, also displays a weak uracil phosphoribosyltransferase activity which is not physiologically significant. This chain is Bifunctional protein PyrR, found in Pseudomonas entomophila (strain L48).